Consider the following 53-residue polypeptide: UPF0391 membrane protein YtjA (53 aa).

Helical transmembrane passes span 4–24 and 30–48; these read WGIIFLVIALIAAALGFGGLA and AAKIVFVVGIILFLVSLFM.

It belongs to the UPF0391 family.

Its subcellular location is the cell membrane. The protein is UPF0391 membrane protein YtjA of Escherichia coli O6:K15:H31 (strain 536 / UPEC).